An 833-amino-acid polypeptide reads, in one-letter code: Lon protease (833 aa).

A Lon N-terminal domain is found at 3 to 198; sequence YPFMATRGVI…LIFSFLVELK (196 aa). Residue 390–397 participates in ATP binding; it reads GPPGTGKT. Residues 627-808 enclose the Lon proteolytic domain; that stretch reads YERIGAVNGL…DEIFENLFGK (182 aa). Active-site residues include serine 714 and lysine 757.

This sequence belongs to the peptidase S16 family. Homohexamer. Organized in a ring with a central cavity.

Its subcellular location is the cytoplasm. It carries out the reaction Hydrolysis of proteins in presence of ATP.. ATP-dependent serine protease that mediates the selective degradation of mutant and abnormal proteins as well as certain short-lived regulatory proteins. Required for cellular homeostasis and for survival from DNA damage and developmental changes induced by stress. Degrades polypeptides processively to yield small peptide fragments that are 5 to 10 amino acids long. Binds to DNA in a double-stranded, site-specific manner. The protein is Lon protease of Mycoplasma mobile (strain ATCC 43663 / 163K / NCTC 11711) (Mesomycoplasma mobile).